The sequence spans 264 residues: Thymidylate synthase (264 aa).

R21 contacts dUMP. H51 lines the (6R)-5,10-methylene-5,6,7,8-tetrahydrofolate pocket. DUMP is bound at residue 126–127; that stretch reads RR. C146 (nucleophile) is an active-site residue. DUMP-binding positions include 166 to 169, N177, and 207 to 209; these read RSAD and HLY. A (6R)-5,10-methylene-5,6,7,8-tetrahydrofolate-binding site is contributed by D169. A263 is a binding site for (6R)-5,10-methylene-5,6,7,8-tetrahydrofolate.

It belongs to the thymidylate synthase family. Bacterial-type ThyA subfamily. In terms of assembly, homodimer.

It is found in the cytoplasm. It carries out the reaction dUMP + (6R)-5,10-methylene-5,6,7,8-tetrahydrofolate = 7,8-dihydrofolate + dTMP. It participates in pyrimidine metabolism; dTTP biosynthesis. Its function is as follows. Catalyzes the reductive methylation of 2'-deoxyuridine-5'-monophosphate (dUMP) to 2'-deoxythymidine-5'-monophosphate (dTMP) while utilizing 5,10-methylenetetrahydrofolate (mTHF) as the methyl donor and reductant in the reaction, yielding dihydrofolate (DHF) as a by-product. This enzymatic reaction provides an intracellular de novo source of dTMP, an essential precursor for DNA biosynthesis. The chain is Thymidylate synthase from Legionella pneumophila (strain Corby).